Consider the following 211-residue polypeptide: Uracil phosphoribosyltransferase (211 aa).

Residues R78, R103, and D130–T138 contribute to the 5-phospho-alpha-D-ribose 1-diphosphate site. Uracil contacts are provided by residues I195 and G200–A202. Residue D201 coordinates 5-phospho-alpha-D-ribose 1-diphosphate.

The protein belongs to the UPRTase family. Mg(2+) serves as cofactor.

The enzyme catalyses UMP + diphosphate = 5-phospho-alpha-D-ribose 1-diphosphate + uracil. It participates in pyrimidine metabolism; UMP biosynthesis via salvage pathway; UMP from uracil: step 1/1. With respect to regulation, allosterically activated by GTP. Functionally, catalyzes the conversion of uracil and 5-phospho-alpha-D-ribose 1-diphosphate (PRPP) to UMP and diphosphate. This chain is Uracil phosphoribosyltransferase, found in Renibacterium salmoninarum (strain ATCC 33209 / DSM 20767 / JCM 11484 / NBRC 15589 / NCIMB 2235).